The following is a 216-amino-acid chain: Large ribosomal subunit protein uL1z (216 aa).

It belongs to the universal ribosomal protein uL1 family. Interacts with the GTPase NUG2.

This chain is Large ribosomal subunit protein uL1z (RPL10AA), found in Arabidopsis thaliana (Mouse-ear cress).